Reading from the N-terminus, the 122-residue chain is Large ribosomal subunit protein uL14 (122 aa).

It belongs to the universal ribosomal protein uL14 family. As to quaternary structure, part of the 50S ribosomal subunit. Forms a cluster with proteins L3 and L19. In the 70S ribosome, L14 and L19 interact and together make contacts with the 16S rRNA in bridges B5 and B8.

Functionally, binds to 23S rRNA. Forms part of two intersubunit bridges in the 70S ribosome. The sequence is that of Large ribosomal subunit protein uL14 from Synechococcus sp. (strain JA-3-3Ab) (Cyanobacteria bacterium Yellowstone A-Prime).